The primary structure comprises 675 residues: Heat shock 70 kDa protein, mitochondrial (675 aa).

Residues 1 to 52 (MAATLLRSLQRRNLSSSSVSAFRSLTGSTKTSYATHKLASLTRPFSSRPAGN) constitute a mitochondrion transit peptide. The interval 639-675 (VSKIGQHMSGGSSGGPSEGGSQGGEQAPEAEYEEVKK) is disordered. Residues 649 to 661 (GSSGGPSEGGSQG) show a composition bias toward gly residues. Acidic residues predominate over residues 666-675 (PEAEYEEVKK).

The protein belongs to the heat shock protein 70 family.

Its subcellular location is the mitochondrion. The sequence is that of Heat shock 70 kDa protein, mitochondrial (HSP1) from Pisum sativum (Garden pea).